The chain runs to 641 residues: Mediator of RNA polymerase II transcription subunit 17 (641 aa).

Residues 159-186 (RLQSFNAAADKLLKSAARLETEVASETR) adopt a coiled-coil conformation.

It belongs to the Mediator complex subunit 17 family. Component of the Mediator complex.

Its subcellular location is the nucleus. In terms of biological role, component of the Mediator complex, a coactivator involved in the regulated transcription of nearly all RNA polymerase II-dependent genes. Mediator functions as a bridge to convey information from gene-specific regulatory proteins to the basal RNA polymerase II transcription machinery. Mediator is recruited to promoters by direct interactions with regulatory proteins and serves as a scaffold for the assembly of a functional preinitiation complex with RNA polymerase II and the general transcription factors. In Aspergillus clavatus (strain ATCC 1007 / CBS 513.65 / DSM 816 / NCTC 3887 / NRRL 1 / QM 1276 / 107), this protein is Mediator of RNA polymerase II transcription subunit 17 (srb4).